The primary structure comprises 180 residues: ATP-dependent protease subunit HslV (180 aa).

Residue threonine 5 is part of the active site. Na(+) is bound by residues glycine 161, cysteine 164, and threonine 167.

This sequence belongs to the peptidase T1B family. HslV subfamily. A double ring-shaped homohexamer of HslV is capped on each side by a ring-shaped HslU homohexamer. The assembly of the HslU/HslV complex is dependent on binding of ATP.

The protein localises to the cytoplasm. It carries out the reaction ATP-dependent cleavage of peptide bonds with broad specificity.. With respect to regulation, allosterically activated by HslU binding. Functionally, protease subunit of a proteasome-like degradation complex believed to be a general protein degrading machinery. This is ATP-dependent protease subunit HslV from Campylobacter jejuni subsp. doylei (strain ATCC BAA-1458 / RM4099 / 269.97).